The chain runs to 238 residues: NADH-quinone oxidoreductase subunit I (238 aa).

4Fe-4S ferredoxin-type domains follow at residues 81-111 (LVPR…IEAG) and 123-152 (VKFV…MDSG). [4Fe-4S] cluster contacts are provided by Cys91, Cys94, Cys97, Cys101, Cys132, Cys135, Cys138, and Cys142.

Belongs to the complex I 23 kDa subunit family. As to quaternary structure, NDH-1 is composed of 14 different subunits. Subunits NuoA, H, J, K, L, M, N constitute the membrane sector of the complex. [4Fe-4S] cluster serves as cofactor.

It localises to the cell inner membrane. It carries out the reaction a quinone + NADH + 5 H(+)(in) = a quinol + NAD(+) + 4 H(+)(out). In terms of biological role, NDH-1 shuttles electrons from NADH, via FMN and iron-sulfur (Fe-S) centers, to quinones in the respiratory chain. The immediate electron acceptor for the enzyme in this species is believed to be ubiquinone. Couples the redox reaction to proton translocation (for every two electrons transferred, four hydrogen ions are translocated across the cytoplasmic membrane), and thus conserves the redox energy in a proton gradient. The chain is NADH-quinone oxidoreductase subunit I from Anaeromyxobacter sp. (strain Fw109-5).